Consider the following 287-residue polypeptide: Inactive phospholipid phosphatase 7 (287 aa).

Residues M1–E75 are disordered. The Cytoplasmic portion of the chain corresponds to M1–M120. Residues S31 to S40 are compositionally biased toward gly residues. A compositionally biased stretch (low complexity) spans Q49–E65. Residues V121 to L141 traverse the membrane as a helical segment. The Extracellular portion of the chain corresponds to M142–T146. The chain crosses the membrane as a helical span at residues L147–V167. Over S168–H215 the chain is Cytoplasmic. Residues L216–S236 form a helical membrane-spanning segment. The Extracellular segment spans residues R237–D247. A helical transmembrane segment spans residues V248–S268. Residues S269–Y287 lie on the Cytoplasmic side of the membrane.

It belongs to the PA-phosphatase related phosphoesterase family.

The protein resides in the nucleus envelope. It localises to the endoplasmic reticulum membrane. It is found in the membrane. Functionally, plays a role as negative regulator of myoblast differentiation, in part through effects on MTOR signaling. Has no detectable enzymatic activity. The chain is Inactive phospholipid phosphatase 7 from Danio rerio (Zebrafish).